The primary structure comprises 183 residues: UPF0200 protein MMP1282 (183 aa).

8-15 contacts ATP; the sequence is GMPGSGKS.

Belongs to the UPF0200 family.

The chain is UPF0200 protein MMP1282 from Methanococcus maripaludis (strain DSM 14266 / JCM 13030 / NBRC 101832 / S2 / LL).